The sequence spans 158 residues: SsrA-binding protein (158 aa).

This sequence belongs to the SmpB family.

It localises to the cytoplasm. Required for rescue of stalled ribosomes mediated by trans-translation. Binds to transfer-messenger RNA (tmRNA), required for stable association of tmRNA with ribosomes. tmRNA and SmpB together mimic tRNA shape, replacing the anticodon stem-loop with SmpB. tmRNA is encoded by the ssrA gene; the 2 termini fold to resemble tRNA(Ala) and it encodes a 'tag peptide', a short internal open reading frame. During trans-translation Ala-aminoacylated tmRNA acts like a tRNA, entering the A-site of stalled ribosomes, displacing the stalled mRNA. The ribosome then switches to translate the ORF on the tmRNA; the nascent peptide is terminated with the 'tag peptide' encoded by the tmRNA and targeted for degradation. The ribosome is freed to recommence translation, which seems to be the essential function of trans-translation. This Bartonella henselae (strain ATCC 49882 / DSM 28221 / CCUG 30454 / Houston 1) (Rochalimaea henselae) protein is SsrA-binding protein.